The sequence spans 228 residues: HTH-type transcriptional regulator TfdT (228 aa).

An HTH lysR-type domain is found at 1–58; it reads MEIRQLKYFVAVAEAGGFGTAAQRMHISQPPLTRQIQALERDIGAKLFERTARGVELT. The H-T-H motif DNA-binding region spans 18–37; sequence FGTAAQRMHISQPPLTRQIQ.

This sequence belongs to the LysR transcriptional regulatory family.

It localises to the cytoplasm. In terms of biological role, does not seem to be involved in the regulation of 3-chlorocatechol degradation. Does not activate the expression of its presumed target operon, tfdCDEF. The protein is HTH-type transcriptional regulator TfdT (tfdT) of Cupriavidus pinatubonensis (strain JMP 134 / LMG 1197) (Cupriavidus necator (strain JMP 134)).